Reading from the N-terminus, the 320-residue chain is Ubiquinone biosynthesis protein COQ4, mitochondrial (320 aa).

The N-terminal 31 residues, 1–31, are a transit peptide targeting the mitochondrion; it reads MFARSALGRSDQLVTALNSQKRQFVLTAATT. Residues H205, D206, H209, and E221 each coordinate Zn(2+).

The protein belongs to the COQ4 family. In terms of assembly, component of a multi-subunit COQ enzyme complex, composed of at least COQ3, COQ4, COQ5, COQ6, COQ7 and COQ9. It depends on Zn(2+) as a cofactor.

It localises to the mitochondrion inner membrane. The enzyme catalyses a 4-hydroxy-3-methoxy-5-(all-trans-polyprenyl)benzoate + H(+) = a 2-methoxy-6-(all-trans-polyprenyl)phenol + CO2. Its pathway is cofactor biosynthesis; ubiquinone biosynthesis. Its function is as follows. Lyase that catalyzes the C1-decarboxylation of 4-hydroxy-3-methoxy-5-(all-trans-polyprenyl)benzoic acid into 2-methoxy-6-(all-trans-polyprenyl)phenol during ubiquinone biosynthesis. The protein is Ubiquinone biosynthesis protein COQ4, mitochondrial of Scheffersomyces stipitis (strain ATCC 58785 / CBS 6054 / NBRC 10063 / NRRL Y-11545) (Yeast).